Reading from the N-terminus, the 276-residue chain is Small ribosomal subunit protein uS2 (276 aa).

The tract at residues 254 to 276 (LAGATAAAPAEGAVATETTPTEG) is disordered. Low complexity predominate over residues 255-276 (AGATAAAPAEGAVATETTPTEG).

It belongs to the universal ribosomal protein uS2 family.

The protein is Small ribosomal subunit protein uS2 of Mycobacterium ulcerans (strain Agy99).